We begin with the raw amino-acid sequence, 672 residues long: MKKNEKANISASYNDLIATICNPRISDVGTYRIESVVGEGSFGKVYLAAHLLTNTKVVLKSSCRKQAIILAREIHHHRRLLHPNITRLYEVVCTEDRIYLAMEYCPNGELYDWVAREKRLDEKTTCRIMWQLCCAIQYLHRQGCVHRDLKLENIFLDKAYNVKLGDFGFSRDSDCSRRTFMNTRCGTVAYCAPELVQGHKYIGECVDIWSLGIIMYALLIGRLPFDEDDVSLTEQKIINECPQYPETLSKNSSSLLKSLLCKDYRLRPSIDQIISHPYFKENGYHSSSIRDPRPSSKAEEKVRKRLEFVGVDMDQLNASISQQRCDMFYGWWLLLLEKEMRKENKKKKGLFHLHKGSSSAVHIAPATPSLKTAQVSVMSNNQDSLKSRHTSSDSSNSLLSTFRSWLFDPKQKHTADTLSSSAIRPRTPSPSAENYLTQENFDSDNLSESLDNSVENLTVFPSINSFGRRHSNLPQTTHVDTGEQNTPFTPPLLKTVNLDGNKDFTFPSNSQNSPSKSSNLSINIDIPPSPLQNTVISPQPTRRSRTPIRSLSGRSSVASSRNSSRTRSYSNVSSASSNSLISIISSKPSSSTVQRQTPFHSPFERLHKSFHFPSGEPFNTRINATAIFTVGSGRKNPQSSSSLMFNQSSVKEEEEPEETSFSDSSKHFTDLL.

The 249-residue stretch at 31 to 279 folds into the Protein kinase domain; the sequence is YRIESVVGEG…IDQIISHPYF (249 aa). ATP contacts are provided by residues 37-45 and Lys-60; that span reads VGEGSFGKV. Catalysis depends on Asp-148, which acts as the Proton acceptor. Ser-231 carries the phosphoserine modification. The span at 375-384 shows a compositional bias: polar residues; sequence VSVMSNNQDS. Disordered stretches follow at residues 375–396, 416–436, 464–572, and 632–672; these read VSVM…DSSN, DTLS…ENYL, NSFG…YSNV, and SGRK…TDLL. Positions 472–487 are enriched in polar residues; sequence NLPQTTHVDTGEQNTP. A compositionally biased stretch (low complexity) spans 508-523; that stretch reads SNSQNSPSKSSNLSIN. Residues 531 to 541 show a composition bias toward polar residues; the sequence is LQNTVISPQPT. Composition is skewed to low complexity over residues 549 to 572 and 639 to 649; these read RSLS…YSNV and SSSSLMFNQSS.

The protein belongs to the protein kinase superfamily. Ser/Thr protein kinase family.

It is found in the cytoplasm. It carries out the reaction L-seryl-[protein] + ATP = O-phospho-L-seryl-[protein] + ADP + H(+). The enzyme catalyses L-threonyl-[protein] + ATP = O-phospho-L-threonyl-[protein] + ADP + H(+). Has a role in meiosis. The protein is Serine/threonine-protein kinase ppk16 (ppk16) of Schizosaccharomyces pombe (strain 972 / ATCC 24843) (Fission yeast).